A 419-amino-acid chain; its full sequence is Carboxypeptidase A1 (419 aa).

The N-terminal stretch at 1–16 (MKRLLVLSVLLAAVFG) is a signal peptide. Positions 17–110 (NENFVGHQVL…KQQMSAFQAR (94 aa)) are cleaved as a propeptide — activation peptide. One can recognise a Peptidase M14 domain in the interval 121-414 (TYHTLDEIYE…LALLTIMDHT (294 aa)). 2 residues coordinate Zn(2+): His179 and Glu182. Residues 179 to 182 (HSRE), Arg237, and 254 to 255 (NR) contribute to the substrate site. A disulfide bond links Cys248 and Cys271. A Zn(2+)-binding site is contributed by His306. Substrate-binding positions include 307-308 (SY) and Tyr358. Glu380 functions as the Proton donor/acceptor in the catalytic mechanism.

Belongs to the peptidase M14 family. As to quaternary structure, monomer. Zn(2+) serves as cofactor.

The protein resides in the secreted. It catalyses the reaction Release of a C-terminal amino acid, but little or no action with -Asp, -Glu, -Arg, -Lys or -Pro.. Its function is as follows. Carboxypeptidase that catalyzes the release of a C-terminal amino acid, but has little or no action with -Asp, -Glu, -Arg, -Lys or -Pro. The polypeptide is Carboxypeptidase A1 (Cpa1) (Mus musculus (Mouse)).